A 275-amino-acid chain; its full sequence is Large ribosomal subunit protein uL2 (275 aa).

The tract at residues 216–275 is disordered; it reads GIRPQTRGSAMNPIDHPHGGGEGKTNSGRHPVTPWGMPTKGYKTRKKKASDKLIISKRKK. The segment covering 257-275 has biased composition (basic residues); it reads YKTRKKKASDKLIISKRKK.

This sequence belongs to the universal ribosomal protein uL2 family. As to quaternary structure, part of the 50S ribosomal subunit. Forms a bridge to the 30S subunit in the 70S ribosome.

One of the primary rRNA binding proteins. Required for association of the 30S and 50S subunits to form the 70S ribosome, for tRNA binding and peptide bond formation. It has been suggested to have peptidyltransferase activity; this is somewhat controversial. Makes several contacts with the 16S rRNA in the 70S ribosome. The sequence is that of Large ribosomal subunit protein uL2 from Aliarcobacter butzleri (strain RM4018) (Arcobacter butzleri).